Reading from the N-terminus, the 948-residue chain is Probable DNA-directed RNA polymerase (948 aa).

Active-site residues include Asp600, Lys680, and Asp853.

This sequence belongs to the phage and mitochondrial RNA polymerase family.

It is found in the mitochondrion. It catalyses the reaction RNA(n) + a ribonucleoside 5'-triphosphate = RNA(n+1) + diphosphate. Functionally, DNA-dependent RNA polymerase catalyzes the transcription of DNA into RNA using the four ribonucleoside triphosphates as substrates. This chain is Probable DNA-directed RNA polymerase, found in Podospora anserina (Pleurage anserina).